The sequence spans 201 residues: Molybdenum cofactor guanylyltransferase (201 aa).

Residues 14-16 (LAG), K31, and D104 each bind GTP. D104 is a Mg(2+) binding site.

This sequence belongs to the MobA family. Monomer. Mg(2+) serves as cofactor.

It is found in the cytoplasm. It catalyses the reaction Mo-molybdopterin + GTP + H(+) = Mo-molybdopterin guanine dinucleotide + diphosphate. Its function is as follows. Transfers a GMP moiety from GTP to Mo-molybdopterin (Mo-MPT) cofactor (Moco or molybdenum cofactor) to form Mo-molybdopterin guanine dinucleotide (Mo-MGD) cofactor. This Helicobacter pylori (strain ATCC 700392 / 26695) (Campylobacter pylori) protein is Molybdenum cofactor guanylyltransferase.